Reading from the N-terminus, the 285-residue chain is (3S)-malyl-CoA thioesterase (285 aa).

Residues Arg-70 and Glu-122 each coordinate substrate. The Mg(2+) site is built by Glu-122 and Asp-148.

The protein belongs to the HpcH/HpaI aldolase family. As to quaternary structure, homodimer or homotrimer. The cofactor is Mg(2+).

The enzyme catalyses (S)-malyl-CoA + H2O = (S)-malate + CoA + H(+). In terms of biological role, catalyzes the hydrolysis of (3S)-malyl-CoA to (3S)-malate and free CoA. Inactive towards beta-methylmalyl-CoA and other CoA esters. In Cereibacter sphaeroides (strain ATCC 17025 / ATH 2.4.3) (Rhodobacter sphaeroides), this protein is (3S)-malyl-CoA thioesterase.